Consider the following 2633-residue polypeptide: MAASSTRTLLMFGPGAMSLNETYFASILSFISTDSASQWALSAVRDIESHWPSLCEAIPKLQHTSGVSNAQKLAEWLRTGTLAPGSTIASLPNAILGPLVVIAQLVEYLRHVDSLSESGLRGGEGFQVPSAPDAETVGCCLGTFSALVVSSSSSWAQFCHNASAVVRIVFVLGALSDAQDATDASGPSVSLIAFWRGGQSLSDLKKALEKFPEAYISVLYDENRVTVTTSTRTVAALKNHLQTVGITTNETEFHGRFHAAQLYQTELEAFLAYCRRFPTFQLPDSSCIVVPTRVNSENVVTSQESLLEISCRAFLVSQFDWIKTFRAAVSSTLQNRASRIIEFGPERCVPPTLLRRLNSQVTHFDFEESIKRAKASLSHDQELPAGVAENDIAVIGMACKVAGADDVNEYWELLLQGKSQHRELIPNDRFVMETPFRPFEAGDDKKKWFGNFIGDHDAFDYKFFKKSPREALHMDPQQRLMLQAAYQAVAQSGYYNANLNVHGPTKVGCYIGVVANDYENNISHTTPIAFSATGALRSYIAGKVSHFFGWTGPAMTVDTACSASTVALDLACKAILSGECSAALVGGTNFFSTPMFFQNLAAGSFLSTTGQCKPFDAKADGYCRGEAVGTVFLKKLSQAIADGDQVLGVISATAINQNRNETPIFVPNSPSLTNVFRTAIEKSGLDAKDISVVEAHGTGTPVGDPVEYDSIRQVFGGAVRAGQDALQVGSVKGLVGHTEGASGVVALVKILLMLQRGQIPPQASFETINPSIKYSPSDNLEITKTPLPWNQEFKAALINNYGAAGSNASVIIKQGPAQLLRRLPPVVDSETEALLSKVGADDAQKAPFFISGLDEKAILAYAQKLRQFIYSHSNLDIQDLAFSVNRQSNWSLGRGAVFSAGSIAELDEKLASIETFPVPSSQPPVILCFGGQVSTFVGLDYQLFAKSAILRRHLDQCDAACKSIGAGSIYPRIFQSDPIDDPSVLQPLLFSLQYSCAMSWIDCGIVPAKLVGHSFGELTALCISGVVSLQDGLKLVYGRSKIIKESWGAERGAMLAVEADLEELESLLTTVNSSLQEGRATIACFNGPRSFTVAGSSAAIDAVQQAISNTQPVLKHKRLNVTNAFHSVLVERLKPDLEALGRQLTFALPQIPLERATRSREDHGLSPSYVANHMREPVYFHHAVERIAKEYPEAIWLEAGSNSTITTMASKALGLPKASTFQPVNVTNNSKASSQLSDVTMNLWKAGLRITFWPHSRAQTYEYKHIILPPYQFEKHRQWLEFKPPQALQVVVQTDSSTDARNGTTEPQPVGLYTLLDRGQDKYRFRVNTAAGQFVDAMSDHAIGKAQTLPAMFGVDLAIEALLSIHPELGDTSRFDPQIYNVVNQEYIHDSSRALFVLFERLGQDENSWAFELTSKGKDGAESLHMSGQLHFQASDDARSRLEFSRLDRFITHDRCLQVLESSGRSDEVIQGQTIYSVLSSSDVNYGQRLRGLQRLVGRSNESAGRLVRRRSGKLFVDFALGEVFTQVGSIWANCMAQHQRNTRNKGIYMATGLEQWSKSPKVLQKFNQGLYDNDPEIEWHVLAQHKRNTSDDSFTTDIFVFDAASGDLEEVILGIKYAPVSLDQLFSGSAIATATTPVANGYVPLTTPFVPVPTTTKQAAVPQPQHVAKKAAPRAAPKRDIKEELWLRLRPVLADISGLEPEEIQPTDALADIGIDSLMGMEMAREVETTFNCTVEQSELLSIVDVPGILKFLQSTLGDEDVHDSSETMSTVSSDGNVHSPPTSGSEMASPNLKVSYGSAYGSSDLPISAVLEAFGESSAKTDQFLKTYGCAGYLDGVSQKQTRLCLVLTSAAFKQLGCDLEAAKPGEVLQPVPFVERHRRFHQYLYSMLEETRIINIDGDVITRTAIPLPSQSADAILQDLMRRHADNGSSHQLAYNVGSRMADVLSGKADGPQLIFGDAKNRELVANFYGELPFNKLYFELMADFLTRLANKLKLSSSRSGTPTLKILEMGAGTGGTTKVLLPILAKLGIPLEYTFTDLSPSLVAQAKRRFKEYPFMKFAVHDIEQPPSDPELVGSQHVVIASNAVHATHSLRDSARNIHKFLRPDGFLMLLEMMRTLHWVDVVWGTLEGWWLFDDGRTHAIVNEQRWEKELLASGFKHVRWTDGKLPEVHVQRVIIALAGDGDGDVSDIPALTSPALKDEEDHGSKLDGEERKRVANAYVESTIRDFAIPSYTGPILSTAPGAGACVLVTGATGSLGSHLVAHIAGLPSVDTIYCLNRPRPGKKGQEDQSRDPLSRLTEVLASKSIQLSEAEISKLRVIETDLPLPQFGLDEIQYEQLLNNVTHIVHSAFPVNGLRSLKQNEPQFTLMRNLVDLAAGVSARRPTEFKFTFQFISSLSAVGMYPKVHGEKRVPEQQWDVDSALPNGYGEAKVICERVLLETLGQHPDRFRAMTVRLGQLSGSMKTGYWNHMEMLSFLFKSAQTLRALPDVDGDVSWLHLEDASASLADLLLRDAPTCHAVYHLDNPRPRDWKDVIPVLADALDIPSSHIVPFEEWLRRVRAYPGEDPWDNPSAKAMDFFEHKFKHMSCGGVTMATDHALEHSETLRAVQPVSDELVRKYIQAWKDSGFLR.

Residues 67–237 (VSNAQKLAEW…TTSTRTVAAL (171 aa)) are N-terminal acylcarrier protein transacylase domain (SAT). C140 serves as the catalytic Nucleophile; for transacylase activity. H258 (proton donor/acceptor; for transacylase activity) is an active-site residue. Positions 389–814 (ENDIAVIGMA…GSNASVIIKQ (426 aa)) constitute a Ketosynthase family 3 (KS3) domain. Residues C561, H696, and H737 each act as for beta-ketoacyl synthase activity in the active site. The malonyl-CoA:ACP transacylase (MAT) domain stretch occupies residues 928-1239 (CFGGQVSTFV…SKASSQLSDV (312 aa)). The N-terminal hotdog fold stretch occupies residues 1307-1437 (PQPVGLYTLL…GQLHFQASDD (131 aa)). One can recognise a PKS/mFAS DH domain in the interval 1307–1627 (PQPVGLYTLL…YAPVSLDQLF (321 aa)). Positions 1338–1509 (MSDHAIGKAQ…SNESAGRLVR (172 aa)) are product template (PT) domain. The tract at residues 1464–1627 (GRSDEVIQGQ…YAPVSLDQLF (164 aa)) is C-terminal hotdog fold. The Carrier domain maps to 1684-1758 (EELWLRLRPV…GILKFLQSTL (75 aa)). The residue at position 1718 (S1718) is an O-(pantetheine 4'-phosphoryl)serine. Residues 1762–1792 (DVHDSSETMSTVSSDGNVHSPPTSGSEMASP) form a disordered region. Residues 1768–1790 (ETMSTVSSDGNVHSPPTSGSEMA) show a composition bias toward polar residues. Positions 1982–2166 (FELMADFLTR…ASGFKHVRWT (185 aa)) are methyltransferase domain. The interval 2253 to 2495 (VTGATGSLGS…TLRALPDVDG (243 aa)) is NADPH-binding (R) domain.

It depends on pantetheine 4'-phosphate as a cofactor.

The protein operates within secondary metabolite biosynthesis. Non-reducing polyketide synthase; part of the SOR gene cluster that mediates the biosynthesis of sorbicillinoids, a diverse group of yellow secondary metabolites that restrict growth of competing pathogenic fungi but not of bacteria. Sorbicillinoids biosynthesis requires the action of two PKSs. The SOR cluster is required for the production of trichodimerol and dihydrotrichotetronin, with sor2 being sufficient for production of trichodimerol, but not dihydrotrichotetronin in the light. Sor1 iteratively combines three acetyl units and the growing chain is modified by the ketoacyl reductase subunit, and optional by the enoyl reductase subunit in the second cycle. The polyketide is then handed over to the PKS sor2, which adds three more acetyl units, and two methyl groups. Sor2 releases an aldehyde, which undergoes spontaneous cyclization resulting in the formation of sorbicillin or 2',3'-dihydrosorbicillin. The monooxygenase sor5 oxidizes sorbicillin and 2',3'-dihydrosorbicillin to 2',3'-dihydrosorbicillinol and sorbicillinol, respectively. The oxidoreductase sor8 further converts sorbicillinol into oxosorbicillinol. Sorbicillinol is the building block for the other sorbicillinoids such as disorbicillinol, bisvertinolon, dihydrobisvertinolone, and dihydrotrichotetronine. This chain is Non-reducing polyketide synthase sor2, found in Hypocrea jecorina (strain QM6a) (Trichoderma reesei).